A 124-amino-acid chain; its full sequence is Sulfur globule protein CV2 (124 aa).

The signal sequence occupies residues M1–A22.

In terms of assembly, the protein envelope of the sulfur globules is composed of the three different proteins CV1, CV2 and CV3.

In terms of biological role, structural protein of the sulfur globules, which are intracellular globules that serve for sulfur storage in purple sulfur bacteria. This chain is Sulfur globule protein CV2 (sgpB), found in Allochromatium vinosum (strain ATCC 17899 / DSM 180 / NBRC 103801 / NCIMB 10441 / D) (Chromatium vinosum).